The primary structure comprises 267 residues: 7alpha-hydroxysteroid dehydrogenase (267 aa).

NADP(+) contacts are provided by residues 13–18 (SATRGI), R38, 63–64 (DA), and N90. Cholate contacts are provided by S145 and Y158. NADP(+) contacts are provided by residues Y158, K162, and 191-195 (IATDA). The active-site Proton acceptor is Y158.

Belongs to the short-chain dehydrogenases/reductases (SDR) family. Homotetramer.

The enzyme catalyses cholate + NADP(+) = 3alpha,12alpha-dihydroxy-7-oxo-5beta-cholanate + NADPH + H(+). It catalyses the reaction chenodeoxycholate + NADP(+) = 7-oxolithocholate + NADPH + H(+). 7alpha-hydroxysteroid dehydrogenase that catalyzes the NADP(+)-dependent oxidation of the 7alpha-hydroxy group of 7alpha-hydroxysteroids, such as the major human bile acids cholate and chenodeoxycholate, to the corresponding 7-oxosteroids. Is thus liley involved in the metabolism of primary bile acids. The protein is 7alpha-hydroxysteroid dehydrogenase of Paraclostridium sordellii (Clostridium sordellii).